Here is a 185-residue protein sequence, read N- to C-terminus: MATGPRYKVPMRRRREVRTDYHQRLRLLKSGKPRLVARVSNAHVRAQLVTPGSDGDETHAAASSEELGEYGWDAPTGNLPSAYLTGYLAGARAVDAGLDEAVLDIGLNTATPGNKTFAVQEGAIDAGLEIPHNDDVLADWSRTRGEHIAAYAEQLDEPLYSGDFDAADLPEHFDDVLATIQEDHE.

This sequence belongs to the universal ribosomal protein uL18 family. Part of the 50S ribosomal subunit. Contacts the 5S and 23S rRNAs.

In terms of biological role, this is one of the proteins that bind and probably mediate the attachment of the 5S RNA into the large ribosomal subunit, where it forms part of the central protuberance. The protein is Large ribosomal subunit protein uL18 of Halorubrum lacusprofundi (strain ATCC 49239 / DSM 5036 / JCM 8891 / ACAM 34).